A 151-amino-acid polypeptide reads, in one-letter code: UPF0178 protein YaiI (151 aa).

It belongs to the UPF0178 family.

The sequence is that of UPF0178 protein YaiI from Salmonella arizonae (strain ATCC BAA-731 / CDC346-86 / RSK2980).